Consider the following 292-residue polypeptide: Glycine--tRNA ligase alpha subunit (292 aa).

This sequence belongs to the class-II aminoacyl-tRNA synthetase family. In terms of assembly, tetramer of two alpha and two beta subunits.

The protein localises to the cytoplasm. The catalysed reaction is tRNA(Gly) + glycine + ATP = glycyl-tRNA(Gly) + AMP + diphosphate. The protein is Glycine--tRNA ligase alpha subunit of Buchnera aphidicola subsp. Schizaphis graminum (strain Sg).